We begin with the raw amino-acid sequence, 399 residues long: Acetate kinase (399 aa).

Residue Asn-10 coordinates Mg(2+). Lys-17 provides a ligand contact to ATP. Arg-91 provides a ligand contact to substrate. Asp-148 serves as the catalytic Proton donor/acceptor. Residues 208 to 212 (HLGNG), 283 to 285 (DCR), and 331 to 335 (GIGEN) contribute to the ATP site. Glu-385 serves as a coordination point for Mg(2+).

Belongs to the acetokinase family. Homodimer. The cofactor is Mg(2+). Requires Mn(2+) as cofactor.

The protein localises to the cytoplasm. It carries out the reaction acetate + ATP = acetyl phosphate + ADP. It participates in metabolic intermediate biosynthesis; acetyl-CoA biosynthesis; acetyl-CoA from acetate: step 1/2. Its function is as follows. Catalyzes the formation of acetyl phosphate from acetate and ATP. Can also catalyze the reverse reaction. This is Acetate kinase from Shewanella baltica (strain OS223).